The primary structure comprises 222 residues: Large ribosomal subunit protein uL4 (222 aa).

It belongs to the universal ribosomal protein uL4 family. In terms of assembly, part of the 50S ribosomal subunit.

Its function is as follows. One of the primary rRNA binding proteins, this protein initially binds near the 5'-end of the 23S rRNA. It is important during the early stages of 50S assembly. It makes multiple contacts with different domains of the 23S rRNA in the assembled 50S subunit and ribosome. Functionally, forms part of the polypeptide exit tunnel. The sequence is that of Large ribosomal subunit protein uL4 from Acidobacterium capsulatum (strain ATCC 51196 / DSM 11244 / BCRC 80197 / JCM 7670 / NBRC 15755 / NCIMB 13165 / 161).